The chain runs to 141 residues: Small ribosomal subunit protein uS12 (141 aa).

Aspartate 89 carries the 3-methylthioaspartic acid modification. The interval 104-141 (ASGAVGPSNTNKLNRNVSRSKYGVKRPKAGAKPASKAK) is disordered. Over residues 110–122 (PSNTNKLNRNVSR) the composition is skewed to polar residues. Basic residues predominate over residues 125–141 (YGVKRPKAGAKPASKAK).

It belongs to the universal ribosomal protein uS12 family. Part of the 30S ribosomal subunit. Contacts proteins S8 and S17. May interact with IF1 in the 30S initiation complex.

Functionally, with S4 and S5 plays an important role in translational accuracy. In terms of biological role, interacts with and stabilizes bases of the 16S rRNA that are involved in tRNA selection in the A site and with the mRNA backbone. Located at the interface of the 30S and 50S subunits, it traverses the body of the 30S subunit contacting proteins on the other side and probably holding the rRNA structure together. The combined cluster of proteins S8, S12 and S17 appears to hold together the shoulder and platform of the 30S subunit. The sequence is that of Small ribosomal subunit protein uS12 from Methylacidiphilum infernorum (isolate V4) (Methylokorus infernorum (strain V4)).